The sequence spans 325 residues: uncharacterized protein (325 aa).

Residues 1–32 form a disordered region; sequence MKQEYIPLDEFPNKSNEGMLNDEGTSSSGLST. Low complexity predominate over residues 23–32; the sequence is EGTSSSGLST. Positions 135–223 form a coiled coil; it reads AEEISNLKTS…LKKREDLLRL (89 aa).

It localises to the cytoplasm. Its subcellular location is the cytoskeleton. It is found in the microtubule organizing center. The protein resides in the spindle pole body. This is an uncharacterized protein from Schizosaccharomyces pombe (strain 972 / ATCC 24843) (Fission yeast).